The following is a 729-amino-acid chain: Phosphoribosylformylglycinamidine synthase subunit PurL (729 aa).

Residue histidine 54 is part of the active site. Residues tyrosine 57 and lysine 96 each contribute to the ATP site. Glutamate 98 contacts Mg(2+). Residues 99–102 and arginine 121 contribute to the substrate site; that span reads SHNH. Residue histidine 100 is the Proton acceptor of the active site. A Mg(2+)-binding site is contributed by aspartate 122. Glutamine 245 provides a ligand contact to substrate. Aspartate 273 provides a ligand contact to Mg(2+). 317-319 contributes to the substrate binding site; the sequence is ETQ. Aspartate 495 and glycine 532 together coordinate ATP. Mg(2+) is bound at residue asparagine 533. Serine 535 is a binding site for substrate.

It belongs to the FGAMS family. In terms of assembly, monomer. Part of the FGAM synthase complex composed of 1 PurL, 1 PurQ and 2 PurS subunits.

The protein localises to the cytoplasm. It catalyses the reaction N(2)-formyl-N(1)-(5-phospho-beta-D-ribosyl)glycinamide + L-glutamine + ATP + H2O = 2-formamido-N(1)-(5-O-phospho-beta-D-ribosyl)acetamidine + L-glutamate + ADP + phosphate + H(+). It functions in the pathway purine metabolism; IMP biosynthesis via de novo pathway; 5-amino-1-(5-phospho-D-ribosyl)imidazole from N(2)-formyl-N(1)-(5-phospho-D-ribosyl)glycinamide: step 1/2. Functionally, part of the phosphoribosylformylglycinamidine synthase complex involved in the purines biosynthetic pathway. Catalyzes the ATP-dependent conversion of formylglycinamide ribonucleotide (FGAR) and glutamine to yield formylglycinamidine ribonucleotide (FGAM) and glutamate. The FGAM synthase complex is composed of three subunits. PurQ produces an ammonia molecule by converting glutamine to glutamate. PurL transfers the ammonia molecule to FGAR to form FGAM in an ATP-dependent manner. PurS interacts with PurQ and PurL and is thought to assist in the transfer of the ammonia molecule from PurQ to PurL. The protein is Phosphoribosylformylglycinamidine synthase subunit PurL of Staphylococcus saprophyticus subsp. saprophyticus (strain ATCC 15305 / DSM 20229 / NCIMB 8711 / NCTC 7292 / S-41).